The following is a 177-amino-acid chain: Large ribosomal subunit protein uL6 (177 aa).

It belongs to the universal ribosomal protein uL6 family. In terms of assembly, part of the 50S ribosomal subunit.

Its function is as follows. This protein binds to the 23S rRNA, and is important in its secondary structure. It is located near the subunit interface in the base of the L7/L12 stalk, and near the tRNA binding site of the peptidyltransferase center. This chain is Large ribosomal subunit protein uL6, found in Sphingopyxis alaskensis (strain DSM 13593 / LMG 18877 / RB2256) (Sphingomonas alaskensis).